A 711-amino-acid polypeptide reads, in one-letter code: Ribosomal RNA large subunit methyltransferase K/L (711 aa).

One can recognise a THUMP domain in the interval 43–154 (LAYRITLWSR…RGQITLGINF (112 aa)).

It belongs to the methyltransferase superfamily. RlmKL family.

The protein resides in the cytoplasm. It carries out the reaction guanosine(2445) in 23S rRNA + S-adenosyl-L-methionine = N(2)-methylguanosine(2445) in 23S rRNA + S-adenosyl-L-homocysteine + H(+). It catalyses the reaction guanosine(2069) in 23S rRNA + S-adenosyl-L-methionine = N(2)-methylguanosine(2069) in 23S rRNA + S-adenosyl-L-homocysteine + H(+). Specifically methylates the guanine in position 2445 (m2G2445) and the guanine in position 2069 (m7G2069) of 23S rRNA. This Shewanella loihica (strain ATCC BAA-1088 / PV-4) protein is Ribosomal RNA large subunit methyltransferase K/L.